The following is a 91-amino-acid chain: RNA-binding protein Hfq (91 aa).

A Sm domain is found at 9–68; the sequence is DPYLNALRRERIPVSIYLVNGIKLQGQIESFDQFVILLKNTVNQMVYKHAISTVVPARSV. Positions 69 to 91 are disordered; it reads SHHNNNHHTAPTEAVENVETQAE.

It belongs to the Hfq family. As to quaternary structure, homohexamer.

RNA chaperone that binds small regulatory RNA (sRNAs) and mRNAs to facilitate mRNA translational regulation in response to envelope stress, environmental stress and changes in metabolite concentrations. Also binds with high specificity to tRNAs. The protein is RNA-binding protein Hfq of Haemophilus influenzae (strain ATCC 51907 / DSM 11121 / KW20 / Rd).